A 284-amino-acid chain; its full sequence is 4-hydroxybenzoate octaprenyltransferase (284 aa).

Transmembrane regions (helical) follow at residues 33 to 53 (VIAA…LGVF), 93 to 113 (IGLF…MNPL), 136 to 156 (HIPQ…AWAA), 159 to 179 (GELP…TIAY), 209 to 229 (LIIG…GQFY), 235 to 252 (YYWT…QQHL), and 264 to 284 (AFLN…VAFW).

The protein belongs to the UbiA prenyltransferase family. It depends on Mg(2+) as a cofactor.

The protein localises to the cell inner membrane. The enzyme catalyses all-trans-octaprenyl diphosphate + 4-hydroxybenzoate = 4-hydroxy-3-(all-trans-octaprenyl)benzoate + diphosphate. It functions in the pathway cofactor biosynthesis; ubiquinone biosynthesis. Catalyzes the prenylation of para-hydroxybenzoate (PHB) with an all-trans polyprenyl group. Mediates the second step in the final reaction sequence of ubiquinone-8 (UQ-8) biosynthesis, which is the condensation of the polyisoprenoid side chain with PHB, generating the first membrane-bound Q intermediate 3-octaprenyl-4-hydroxybenzoate. This Vibrio parahaemolyticus serotype O3:K6 (strain RIMD 2210633) protein is 4-hydroxybenzoate octaprenyltransferase.